The following is a 402-amino-acid chain: DNA replication and repair protein RecF (402 aa).

Gly-30–Thr-37 is a binding site for ATP.

Belongs to the RecF family.

The protein localises to the cytoplasm. Functionally, the RecF protein is involved in DNA metabolism; it is required for DNA replication and normal SOS inducibility. RecF binds preferentially to single-stranded, linear DNA. It also seems to bind ATP. This Pseudarthrobacter chlorophenolicus (strain ATCC 700700 / DSM 12829 / CIP 107037 / JCM 12360 / KCTC 9906 / NCIMB 13794 / A6) (Arthrobacter chlorophenolicus) protein is DNA replication and repair protein RecF.